We begin with the raw amino-acid sequence, 226 residues long: Fibronectin type III domain-containing protein 9 (226 aa).

The Fibronectin type-III domain maps to 1-101 (MNIEVGNVSH…FHTLDKSPLA (101 aa)). Residues 113-133 (LWVLMAILLACFTAVLAFICL) form a helical membrane-spanning segment.

Its subcellular location is the membrane. The chain is Fibronectin type III domain-containing protein 9 (Fndc9) from Mus musculus (Mouse).